The sequence spans 200 residues: uncharacterized protein (200 aa).

A helical transmembrane segment spans residues 104 to 124 (SNLLICFLFLCGLYHISVFTG).

Its subcellular location is the membrane. This is an uncharacterized protein from Escherichia coli (strain K12).